The sequence spans 536 residues: Phosphoenolpyruvate carboxykinase (ATP) (536 aa).

Residues R61, Y195, and K201 each coordinate substrate. Residues K201, H220, and 236–244 (GLSGTGKTT) contribute to the ATP site. Residues K201 and H220 each coordinate Mn(2+). D257 is a binding site for Mn(2+). ATP-binding residues include E285, R322, and T447. R322 serves as a coordination point for substrate.

It belongs to the phosphoenolpyruvate carboxykinase (ATP) family. Mn(2+) serves as cofactor.

The protein resides in the cytoplasm. The enzyme catalyses oxaloacetate + ATP = phosphoenolpyruvate + ADP + CO2. It functions in the pathway carbohydrate biosynthesis; gluconeogenesis. Functionally, involved in the gluconeogenesis. Catalyzes the conversion of oxaloacetate (OAA) to phosphoenolpyruvate (PEP) through direct phosphoryl transfer between the nucleoside triphosphate and OAA. In Sinorhizobium medicae (strain WSM419) (Ensifer medicae), this protein is Phosphoenolpyruvate carboxykinase (ATP).